A 207-amino-acid polypeptide reads, in one-letter code: Thymidylate kinase (207 aa).

Glycine 12 to serine 19 serves as a coordination point for ATP.

Belongs to the thymidylate kinase family.

It carries out the reaction dTMP + ATP = dTDP + ADP. Functionally, phosphorylation of dTMP to form dTDP in both de novo and salvage pathways of dTTP synthesis. The protein is Thymidylate kinase of Bordetella petrii (strain ATCC BAA-461 / DSM 12804 / CCUG 43448).